Here is a 479-residue protein sequence, read N- to C-terminus: Ribosomal RNA small subunit methyltransferase F (479 aa).

Residues 125–131 (AAAPGSK), E149, D176, and D194 each bind S-adenosyl-L-methionine. C247 serves as the catalytic Nucleophile.

The protein belongs to the class I-like SAM-binding methyltransferase superfamily. RsmB/NOP family.

It localises to the cytoplasm. It catalyses the reaction cytidine(1407) in 16S rRNA + S-adenosyl-L-methionine = 5-methylcytidine(1407) in 16S rRNA + S-adenosyl-L-homocysteine + H(+). Its function is as follows. Specifically methylates the cytosine at position 1407 (m5C1407) of 16S rRNA. In Escherichia coli O127:H6 (strain E2348/69 / EPEC), this protein is Ribosomal RNA small subunit methyltransferase F.